The following is a 319-amino-acid chain: ATP-dependent 6-phosphofructokinase (319 aa).

Residue glycine 11 participates in ATP binding. 21 to 25 serves as a coordination point for ADP; it reads RAVVR. ATP contacts are provided by residues 72-73 and 102-105; these read RC and GDGS. Aspartate 103 contributes to the Mg(2+) binding site. 125–127 is a binding site for substrate; the sequence is TID. Aspartate 127 acts as the Proton acceptor in catalysis. ADP is bound at residue arginine 154. Substrate contacts are provided by residues arginine 162 and 169 to 171; that span reads MGR. ADP is bound by residues 185–187, arginine 211, and 213–215; these read GAE and KKH. Residues glutamate 222, arginine 243, and 249–252 each bind substrate; that span reads HVQR.

It belongs to the phosphofructokinase type A (PFKA) family. ATP-dependent PFK group I subfamily. Prokaryotic clade 'B1' sub-subfamily. As to quaternary structure, homotetramer. Mg(2+) is required as a cofactor.

It is found in the cytoplasm. The enzyme catalyses beta-D-fructose 6-phosphate + ATP = beta-D-fructose 1,6-bisphosphate + ADP + H(+). It functions in the pathway carbohydrate degradation; glycolysis; D-glyceraldehyde 3-phosphate and glycerone phosphate from D-glucose: step 3/4. With respect to regulation, allosterically activated by ADP and other diphosphonucleosides, and allosterically inhibited by phosphoenolpyruvate. In terms of biological role, catalyzes the phosphorylation of D-fructose 6-phosphate to fructose 1,6-bisphosphate by ATP, the first committing step of glycolysis. The polypeptide is ATP-dependent 6-phosphofructokinase (Bacillus mycoides (strain KBAB4) (Bacillus weihenstephanensis)).